The following is a 134-amino-acid chain: Profilin-3 (134 aa).

An intrachain disulfide couples Cys-13 to Cys-118. Residues 84 to 100 carry the Involved in PIP2 interaction motif; sequence AVIRGKKGSGGITIKKT. Thr-114 is subject to Phosphothreonine.

Belongs to the profilin family. In terms of assembly, occurs in many kinds of cells as a complex with monomeric actin in a 1:1 ratio. Post-translationally, phosphorylated by MAP kinases.

The protein localises to the cytoplasm. The protein resides in the cytoskeleton. Binds to actin and affects the structure of the cytoskeleton. At high concentrations, profilin prevents the polymerization of actin, whereas it enhances it at low concentrations. The polypeptide is Profilin-3 (Olea europaea (Common olive)).